Reading from the N-terminus, the 373-residue chain is MHKESPIIRRKSTRIYVGNVPIGDGAPIAVQSMTNTRTTDVEATVNQIKSLERVGVDIVRVSVPTMDAAEAFKLIKQQVKVPLVADIHFDYRIALKVAEYGVDCLRINPGNIGNEERIRQVVDCARDRNIPIRIGVNGGSLEKDIQEKYGEPTPEALVESAMRHVDILDKLNFDQFKVSVKASDVFLAVDSYRLLAKKIDQPLHLGITEAGGARAGSVKSAIGLGILLSEGIGDTLRISLAADPVEEVKVGFDILKSLRIRSRGINFIACPTCSRQEFDVIGTVNELEQRLEDIITPMDVSIIGCVVNGPGEAEVSTLGVTGAKTRSGFYEDGVRQKERLDNSNMIDLLEAKIRTKAAMLDGNLRININQLDK.

Residues cysteine 270, cysteine 273, cysteine 305, and glutamate 312 each contribute to the [4Fe-4S] cluster site.

It belongs to the IspG family. [4Fe-4S] cluster serves as cofactor.

It carries out the reaction (2E)-4-hydroxy-3-methylbut-2-enyl diphosphate + oxidized [flavodoxin] + H2O + 2 H(+) = 2-C-methyl-D-erythritol 2,4-cyclic diphosphate + reduced [flavodoxin]. Its pathway is isoprenoid biosynthesis; isopentenyl diphosphate biosynthesis via DXP pathway; isopentenyl diphosphate from 1-deoxy-D-xylulose 5-phosphate: step 5/6. Its function is as follows. Converts 2C-methyl-D-erythritol 2,4-cyclodiphosphate (ME-2,4cPP) into 1-hydroxy-2-methyl-2-(E)-butenyl 4-diphosphate. This Proteus mirabilis (strain HI4320) protein is 4-hydroxy-3-methylbut-2-en-1-yl diphosphate synthase (flavodoxin).